A 331-amino-acid chain; its full sequence is FMRFamide-related neuropeptides (331 aa).

A signal peptide spans 1–25 (MRCWSPCSLLVVIVIYCLSSHTSEA). A propeptide spanning residues 26–65 (FDLAQACVESQRLSLLPICDTIFAVQQEGVQQSADDGMRS) is cleaved from the precursor. A phenylalanine amide mark is found at Phe71 and Phe83. Positions 86–94 (NVPDLPFED) are excised as a propeptide. Residue Phe100 is modified to Phenylalanine amide. The propeptide occupies 103–168 (AAPQLDELLK…YIDDVEDSDV (66 aa)). A disordered region spans residues 122–158 (QKADETSVRRKRSTDAAPQNNAENPEQKNDSAKITKR). The segment covering 146 to 158 (PEQKNDSAKITKR) has biased composition (basic and acidic residues). Phe174 and Phe181 each carry phenylalanine amide. A propeptide spanning residues 184–194 (NPSDVGNKLTE) is cleaved from the precursor. At Phe200 the chain carries Phenylalanine amide. A propeptide spanning residues 203–205 (DPE) is cleaved from the precursor. Phe211 is modified (phenylalanine amide). Positions 214–216 (SDD) are excised as a propeptide. Phe222 bears the Phenylalanine amide mark. Residues 225 to 236 (NPSDAEDELEED) constitute a propeptide that is removed on maturation. Phe242 carries the post-translational modification Phenylalanine amide. Positions 245 to 254 (GGEDDEEEAE) are excised as a propeptide. A Phenylalanine amide modification is found at Phe260. A propeptide spanning residues 263-265 (DPE) is cleaved from the precursor. Phenylalanine amide is present on Phe271. Positions 274–277 (SGED) are excised as a propeptide. Positions 279–296 (RFMRFGRNPDEQEADKRF) are enriched in basic and acidic residues. The segment at 279–310 (RFMRFGRNPDEQEADKRFMRFGRGGEDDEVST) is disordered. Phe283 is modified (phenylalanine amide). A propeptide spanning residues 286-293 (NPDEQEAD) is cleaved from the precursor. Phenylalanine amide is present on Phe299. Positions 302–312 (GGEDDEVSTED) are excised as a propeptide. At Phe318 the chain carries Phenylalanine amide. Positions 321–331 (SADKCKGCLEG) are excised as a propeptide.

This sequence belongs to the FARP (FMRFamide related peptide) family.

Its subcellular location is the secreted. Excitatory neurotransmitters that directly modulate chromatophore function by activating chromatophore expansion at the chromatophore neuromuscular junction. The sequence is that of FMRFamide-related neuropeptides from Doryteuthis opalescens (California market squid).